Here is a 126-residue protein sequence, read N- to C-terminus: MNIIQQLEKEQFDKLSATKTIPEFGPGDTVIVNVKVVEGERTRVQAYEGVCIGRSGGGLNESFTVRKISYGEGVERVFPVMSPMIDSIKVVRRGKVRRAKLYYLRKLRGKSARIVEKKTDRAAATN.

It belongs to the bacterial ribosomal protein bL19 family.

In terms of biological role, this protein is located at the 30S-50S ribosomal subunit interface and may play a role in the structure and function of the aminoacyl-tRNA binding site. This chain is Large ribosomal subunit protein bL19, found in Nitrobacter winogradskyi (strain ATCC 25391 / DSM 10237 / CIP 104748 / NCIMB 11846 / Nb-255).